The chain runs to 502 residues: Glutamate--tRNA ligase (502 aa).

The 'HIGH' region signature appears at 9 to 19; it reads PSPTGFPHVGT. A 'KMSKS' region motif is present at residues 250–254; the sequence is KLSKR. Position 253 (Lys-253) interacts with ATP.

It belongs to the class-I aminoacyl-tRNA synthetase family. Glutamate--tRNA ligase type 1 subfamily. Monomer.

It is found in the cytoplasm. It carries out the reaction tRNA(Glu) + L-glutamate + ATP = L-glutamyl-tRNA(Glu) + AMP + diphosphate. In terms of biological role, catalyzes the attachment of glutamate to tRNA(Glu) in a two-step reaction: glutamate is first activated by ATP to form Glu-AMP and then transferred to the acceptor end of tRNA(Glu). The protein is Glutamate--tRNA ligase of Acinetobacter baumannii (strain AYE).